Reading from the N-terminus, the 435-residue chain is 3-phosphoshikimate 1-carboxyvinyltransferase (435 aa).

Lysine 22, serine 23, and arginine 27 together coordinate 3-phosphoshikimate. Position 22 (lysine 22) interacts with phosphoenolpyruvate. Phosphoenolpyruvate-binding residues include glycine 95 and arginine 123. The 3-phosphoshikimate site is built by serine 168, glutamine 170, aspartate 319, and lysine 346. Glutamine 170 serves as a coordination point for phosphoenolpyruvate. Residue aspartate 319 is the Proton acceptor of the active site. Positions 350 and 393 each coordinate phosphoenolpyruvate.

Belongs to the EPSP synthase family. In terms of assembly, monomer.

The protein resides in the cytoplasm. The catalysed reaction is 3-phosphoshikimate + phosphoenolpyruvate = 5-O-(1-carboxyvinyl)-3-phosphoshikimate + phosphate. It participates in metabolic intermediate biosynthesis; chorismate biosynthesis; chorismate from D-erythrose 4-phosphate and phosphoenolpyruvate: step 6/7. Its function is as follows. Catalyzes the transfer of the enolpyruvyl moiety of phosphoenolpyruvate (PEP) to the 5-hydroxyl of shikimate-3-phosphate (S3P) to produce enolpyruvyl shikimate-3-phosphate and inorganic phosphate. The chain is 3-phosphoshikimate 1-carboxyvinyltransferase from Chloroflexus aggregans (strain MD-66 / DSM 9485).